A 238-amino-acid chain; its full sequence is MNSDANVDLTEIAKFEAIASRWWDMEGEFKPLHQINPVRLDWITDKSGGLFGKRILDIGCGGGILSESMARRGAHVTGIDMGKEPLGVARLHALEQGVELQYQQMTAEEHASQTPDQYDVVTCMEMLEHVPDPASVLRAIATLVRPGGRVFISTINRNPKAYLMMIIGAEYLMKMVPKGTHDHKKFITPAELCRMGEAAGLLVRDMSGVHYAPLSNQFKLGKNVDVNYMVEFIRPEHG.

Arg-39, Gly-59, Asp-80, and Met-124 together coordinate S-adenosyl-L-methionine.

It belongs to the methyltransferase superfamily. UbiG/COQ3 family.

It catalyses the reaction a 3-demethylubiquinol + S-adenosyl-L-methionine = a ubiquinol + S-adenosyl-L-homocysteine + H(+). The catalysed reaction is a 3-(all-trans-polyprenyl)benzene-1,2-diol + S-adenosyl-L-methionine = a 2-methoxy-6-(all-trans-polyprenyl)phenol + S-adenosyl-L-homocysteine + H(+). It functions in the pathway cofactor biosynthesis; ubiquinone biosynthesis. Functionally, O-methyltransferase that catalyzes the 2 O-methylation steps in the ubiquinone biosynthetic pathway. The polypeptide is Ubiquinone biosynthesis O-methyltransferase (Aeromonas salmonicida (strain A449)).